A 290-amino-acid chain; its full sequence is Tegument protein VP22 (290 aa).

Over residues 98-112 the composition is skewed to polar residues; sequence STSHGRLSPTKTTPH. Residues 98-156 form a disordered region; that stretch reads STSHGRLSPTKTTPHPKSAGVTPPQRVPARPATRAAAPSATPTQPDCVAKQRTSPGVNS. Residues 118-142 are compositionally biased toward low complexity; it reads VTPPQRVPARPATRAAAPSATPTQP. Positions 146–149 match the Nuclear localization signal motif; the sequence is AKQR. A Nuclear export signal motif is present at residues 219 to 231; it reads LDRFLKAAAIRIL.

It belongs to the alphaherpesvirinae VP22 tegument protein family. In terms of assembly, interacts with gE (via C-terminus); this interaction is necessary for the recruitment of VP22 to the Golgi and its packaging into virions. Interacts with gM (via C-terminus). Interacts with VP16; this interaction allows the formation of a tripartite complex composed of VP16, VP22 and UL41/VHS. Interacts with the capsid-binding protein UL16. Interacts with host CGAS. In terms of processing, highly phosphorylated in the host cell. Packaging is selective for underphosphorylated forms.

The protein resides in the virion tegument. Its subcellular location is the host cytoplasm. It localises to the host nucleus. The protein localises to the host Golgi apparatus. In terms of biological role, tegument protein that plays different roles during the time course of infection. Participates in both the accumulation of viral mRNAs and viral protein translation at late time of infection. Modulates the RNase activity of the virion host shutoff protein UL41 probably to ensure necessary levels of key cellular mRNAs and proteins. Plays a role in microtubule reorganization that occurs after viral infection by stabilizing microtubule network. Plays a role in the inhibition of host innate immune system by targeting the CGAS enzymatic activity which is the principal cytosolic DNA sensor that detects invading viral DNA. Acts by mediating disruption of liquid-like droplets in which CGAS is activated, thereby preventing CGAS activity. The sequence is that of Tegument protein VP22 (11) from Equus caballus (Horse).